The following is a 643-amino-acid chain: Transducer protein Htr8 (643 aa).

Helical transmembrane passes span 48–68 (VFVL…GTES), 79–99 (PGIL…LASI), 115–134 (VLAS…EAHF), 149–169 (WLPF…FGMI), and 184–204 (PWVW…ALMA). The HAMP domain occupies 273-326 (ERLEATANTYGAAMARAADGDLSVRLDPDVENDAMAAIAASFNEMLDETETTIR). The Methyl-accepting transducer domain occupies 345–581 (GVVEIEDASG…EAVSMIAEVS (237 aa)).

This sequence belongs to the methyl-accepting chemotaxis (MCP) protein family. Post-translationally, methylated by CheR.

Its subcellular location is the cell membrane. Functionally, potentially involved in chemo- or phototactic signal transduction. This chain is Transducer protein Htr8 (htr8), found in Halobacterium salinarum (strain ATCC 29341 / DSM 671 / R1).